A 348-amino-acid chain; its full sequence is N-acetyl-gamma-glutamyl-phosphate reductase (348 aa).

Cys149 is an active-site residue.

It belongs to the NAGSA dehydrogenase family. Type 1 subfamily.

The protein localises to the cytoplasm. The catalysed reaction is N-acetyl-L-glutamate 5-semialdehyde + phosphate + NADP(+) = N-acetyl-L-glutamyl 5-phosphate + NADPH + H(+). It functions in the pathway amino-acid biosynthesis; L-arginine biosynthesis; N(2)-acetyl-L-ornithine from L-glutamate: step 3/4. Catalyzes the NADPH-dependent reduction of N-acetyl-5-glutamyl phosphate to yield N-acetyl-L-glutamate 5-semialdehyde. The chain is N-acetyl-gamma-glutamyl-phosphate reductase from Cellvibrio japonicus (strain Ueda107) (Pseudomonas fluorescens subsp. cellulosa).